The sequence spans 383 residues: S-(hydroxymethyl)glutathione dehydrogenase (383 aa).

Zn(2+) is bound at residue Cys51. Residue His52 coordinates NAD(+). Residues His73, Glu74, Cys103, Cys106, Cys109, Cys117, and Cys180 each contribute to the Zn(2+) site. Residues 205–210 (GAGCVG), Asp229, and 298–300 (IGV) contribute to the NAD(+) site.

This sequence belongs to the zinc-containing alcohol dehydrogenase family. Class-III subfamily. Zn(2+) serves as cofactor.

The catalysed reaction is a primary alcohol + NAD(+) = an aldehyde + NADH + H(+). The enzyme catalyses a secondary alcohol + NAD(+) = a ketone + NADH + H(+). It catalyses the reaction S-(hydroxymethyl)glutathione + NADP(+) = S-formylglutathione + NADPH + H(+). It carries out the reaction S-(hydroxymethyl)glutathione + NAD(+) = S-formylglutathione + NADH + H(+). The catalysed reaction is S-nitrosoglutathione + NADH + H(+) = S-(hydroxysulfenamide)glutathione + NAD(+). Functionally, oxidizes long-chain alcohols and, in the presence of glutathione, is able to oxidize formaldehyde. Also acts as a S-nitroso-glutathione reductase by catalyzing the NADH-dependent reduction of S-nitrosoglutathione, thereby regulating protein S-nitrosylation. This is S-(hydroxymethyl)glutathione dehydrogenase (FDH1) from Aspergillus oryzae (strain ATCC 42149 / RIB 40) (Yellow koji mold).